A 457-amino-acid polypeptide reads, in one-letter code: UDP-N-acetylmuramate--L-alanine ligase (457 aa).

Gly-112–Thr-118 contributes to the ATP binding site.

Belongs to the MurCDEF family.

The protein localises to the cytoplasm. It catalyses the reaction UDP-N-acetyl-alpha-D-muramate + L-alanine + ATP = UDP-N-acetyl-alpha-D-muramoyl-L-alanine + ADP + phosphate + H(+). Its pathway is cell wall biogenesis; peptidoglycan biosynthesis. In terms of biological role, cell wall formation. In Solidesulfovibrio magneticus (strain ATCC 700980 / DSM 13731 / RS-1) (Desulfovibrio magneticus), this protein is UDP-N-acetylmuramate--L-alanine ligase.